The primary structure comprises 344 residues: Protein L-Myc-1-A (344 aa).

Disordered regions lie at residues 100–162 (RLTT…DDEI) and 209–261 (PPEP…EDIV). Composition is skewed to polar residues over residues 102–112 (TTASPRATNPQ), 123–133 (PGVNSIEQNAN), and 236–255 (PALQQCSSPMPGSPLASGSS). In terms of domain architecture, bHLH spans 261 to 313 (VKKKNHNYLERKRRNDLRSRFLALREEVPSLTRSTKTPKVVVLSKATEFLKGL). The interval 313-341 (LVIQEQQLTAEKFKLWSRHQQLLRRISHL) is leucine-zipper.

In terms of assembly, efficient DNA binding requires dimerization with another bHLH protein. Binds DNA as a heterodimer with MAX. As to expression, high levels in oocytes, modest levels in kidney and low levels in spleen.

It is found in the nucleus. This chain is Protein L-Myc-1-A (mycl1-a), found in Xenopus laevis (African clawed frog).